An 860-amino-acid chain; its full sequence is MRKDVTPMMRQYLNIKDKHKDAILFFRVGSFYEMFFDDALEGSKLLGLTLTKRENVPMCGVPCHTSKDYIKKLILLDKKVAICEQGLQTDPKGPLEREVVEVISPGVVIDEDFLQDDINNYLIAISDYKDYYSFSYIDLSTSRLGIILYEGNFLEKLRRDIEKYSPKEIIVSEDFYYEYLEKLALDRFLVNKIPHWHFDKEIAMKSLKEHFNVLSLSALGFKEDEPYYVSSFLIIDYIKNNLKNLLINIDTIHINNDSEYMFLDDVTQINLELVKNNNDLTSCYSLYSVLNDCKTPMGKRLLREYILNPLLDIVAINNRLDHVEFLNNNINLSMKLRDILSNVWDIERIISRLQMKKYVKKDFLLIKESLTAFFLAKRLLNEHSFSYWIFDVNDENNIREIYSLIDCSISKEPDELIQHGYNFEIDRLREIKNNASKYVDDYLNFERNFSKISSLKIRRINVRGLFFEVTKSYYGQVPSHFIESQTLNSVKRYKTNKLIELERDINDAEDNLLALEQEVFDDIASKIVKHSVVIKKIANFFAYVDVVSDFAYLAKKNEYVRPTLTNNKEIILECSRHPVVEHYMKGVEAFTKNSVKIDNDKYFCLITGPNMAGKSTYLRQTALVVLMGHIGSFVPANQAIIGITDKIFCRIGASDNISKGESTFLVEMNETANILRNATQNSLIIMDEVGRGTSTNDGLAIAYSIVEYILEHIQARSLFATHFHELSAIKHDSFVNLSMKIERQGDELIFLREVEEKPSLNSYGIYVARIAGIPLKVIERANVILKSLTSREHLYVPEFFTSATLVINDGEEAMKEDLSYELELNDYLELKNFISKIDVNNITPFQAMNLLSEIILKTKT.

608-615 (GPNMAGKS) contributes to the ATP binding site.

Belongs to the DNA mismatch repair MutS family.

Functionally, this protein is involved in the repair of mismatches in DNA. It is possible that it carries out the mismatch recognition step. This protein has a weak ATPase activity. In Borrelia turicatae (strain 91E135), this protein is DNA mismatch repair protein MutS.